Consider the following 286-residue polypeptide: 33 kDa chaperonin (286 aa).

Cystine bridges form between Cys-225–Cys-227 and Cys-258–Cys-261.

This sequence belongs to the HSP33 family. Post-translationally, under oxidizing conditions two disulfide bonds are formed involving the reactive cysteines. Under reducing conditions zinc is bound to the reactive cysteines and the protein is inactive.

The protein localises to the cytoplasm. In terms of biological role, redox regulated molecular chaperone. Protects both thermally unfolding and oxidatively damaged proteins from irreversible aggregation. Plays an important role in the bacterial defense system toward oxidative stress. The sequence is that of 33 kDa chaperonin from Shewanella putrefaciens (strain CN-32 / ATCC BAA-453).